We begin with the raw amino-acid sequence, 412 residues long: Proline-rich protein 30 (412 aa).

Composition is skewed to polar residues over residues 1-15 and 23-39; these read MLPQNKDQVLPQTSV and GFSQLVDSSPHNLQPLS. 3 disordered regions span residues 1–88, 123–174, and 317–412; these read MLPQ…HPYS, PLTP…SNRQ, and RPKE…KSSV. Low complexity-rich tracts occupy residues 50-59, 126-142, and 334-350; these read PFSSTQSRRP, PSFSPSQPQNSSLPHSP, and QLPASQPPAAQARADPV. Polar residues predominate over residues 353–372; it reads TPSQTRSFRSAGLQSPNSPR.

The chain is Proline-rich protein 30 (PRR30) from Homo sapiens (Human).